The primary structure comprises 230 residues: Exosome complex component Rrp4 (230 aa).

One can recognise an S1 motif domain in the interval asparagine 60 to lysine 129. One can recognise a KH domain in the interval glutamate 137–isoleucine 195.

It belongs to the RRP4 family. As to quaternary structure, component of the archaeal exosome complex. Forms a trimer of Rrp4 and/or Csl4 subunits. The trimer associates with a hexameric ring-like arrangement composed of 3 Rrp41-Rrp42 heterodimers.

The protein resides in the cytoplasm. Its function is as follows. Non-catalytic component of the exosome, which is a complex involved in RNA degradation. Increases the RNA binding and the efficiency of RNA degradation. Confers strong poly(A) specificity to the exosome. The chain is Exosome complex component Rrp4 from Picrophilus torridus (strain ATCC 700027 / DSM 9790 / JCM 10055 / NBRC 100828 / KAW 2/3).